The primary structure comprises 203 residues: Guanylate kinase (203 aa).

The region spanning 3–181 is the Guanylate kinase-like domain; it reads GTLYIVAAPS…AVSEMCAIFT (179 aa). An ATP-binding site is contributed by 10–17; it reads APSGAGKS.

This sequence belongs to the guanylate kinase family.

The protein resides in the cytoplasm. It carries out the reaction GMP + ATP = GDP + ADP. In terms of biological role, essential for recycling GMP and indirectly, cGMP. The chain is Guanylate kinase from Xanthomonas axonopodis pv. citri (strain 306).